Consider the following 602-residue polypeptide: Elongation factor 4 (602 aa).

The tr-type G domain maps to 8-189; the sequence is KNIRNFSIIA…KIITTIPAPS (182 aa). Residues 20–25 and 136–139 each bind GTP; these read DHGKST and NKID.

It belongs to the TRAFAC class translation factor GTPase superfamily. Classic translation factor GTPase family. LepA subfamily.

It is found in the cell inner membrane. It catalyses the reaction GTP + H2O = GDP + phosphate + H(+). Functionally, required for accurate and efficient protein synthesis under certain stress conditions. May act as a fidelity factor of the translation reaction, by catalyzing a one-codon backward translocation of tRNAs on improperly translocated ribosomes. Back-translocation proceeds from a post-translocation (POST) complex to a pre-translocation (PRE) complex, thus giving elongation factor G a second chance to translocate the tRNAs correctly. Binds to ribosomes in a GTP-dependent manner. The chain is Elongation factor 4 from Helicobacter pylori (strain ATCC 700392 / 26695) (Campylobacter pylori).